The primary structure comprises 40 residues: Photosystem II reaction center protein J (40 aa).

The chain crosses the membrane as a helical span at residues 8–28 (IPLWIIGTVAGIVVIGLIGLF).

Belongs to the PsbJ family. PSII is composed of 1 copy each of membrane proteins PsbA, PsbB, PsbC, PsbD, PsbE, PsbF, PsbH, PsbI, PsbJ, PsbK, PsbL, PsbM, PsbT, PsbX, PsbY, PsbZ, Psb30/Ycf12, at least 3 peripheral proteins of the oxygen-evolving complex and a large number of cofactors. It forms dimeric complexes.

It is found in the plastid. The protein resides in the chloroplast thylakoid membrane. Functionally, one of the components of the core complex of photosystem II (PSII). PSII is a light-driven water:plastoquinone oxidoreductase that uses light energy to abstract electrons from H(2)O, generating O(2) and a proton gradient subsequently used for ATP formation. It consists of a core antenna complex that captures photons, and an electron transfer chain that converts photonic excitation into a charge separation. This Pisum sativum (Garden pea) protein is Photosystem II reaction center protein J.